A 714-amino-acid chain; its full sequence is Calpain-1 catalytic subunit (714 aa).

S2 bears the N-acetylserine mark. One can recognise a Calpain catalytic domain in the interval 55–354; that stretch reads LFRDEAFPPV…FTRLEICNLT (300 aa). Residues Q109 and D114 each coordinate Ca(2+). Catalysis depends on residues C115, H272, and N296. The Ca(2+) site is built by N316, D318, and D323. T354 is subject to Phosphothreonine. Residues 355–526 form a domain III region; sequence PDALKSRTIR…KSAGTVELDD (172 aa). The interval 527-542 is linker; it reads QIQANLPDEQVLSEEE. 4 EF-hand domains span residues 541-576, 585-618, 615-650, and 680-714; these read EEID…IISK, FSLE…NRIR, NRIR…AGFK, and VRLE…TMFA. A domain IV region spans residues 543–713; the sequence is IDENFKALFR…LFKWLQLTMF (171 aa). Residues D598, D600, N602, K604, E609, D628, D630, S632, S634, and E639 each coordinate Ca(2+).

It belongs to the peptidase C2 family. Forms a heterodimer with a small (regulatory) subunit CAPNS1. Requires Ca(2+) as cofactor. In terms of processing, undergoes calcium-induced successive autoproteolytic cleavages that generate a membrane-bound 78 kDa active form and an intracellular 75 kDa active form. Calpastatin reduces with high efficiency the transition from 78 kDa to 75 kDa calpain forms. Ubiquitous.

The protein resides in the cytoplasm. Its subcellular location is the cell membrane. It catalyses the reaction Broad endopeptidase specificity.. Its activity is regulated as follows. Activated by micromolar concentrations of calcium and inhibited by calpastatin. Calcium-regulated non-lysosomal thiol-protease which catalyzes limited proteolysis of substrates involved in cytoskeletal remodeling and signal transduction. Proteolytically cleaves CTBP1 at 'Asn-375', 'Gly-387' and 'His-409'. Cleaves and activates caspase-7 (CASP7). The polypeptide is Calpain-1 catalytic subunit (Homo sapiens (Human)).